The following is a 198-amino-acid chain: Probable GTP-binding protein EngB (198 aa).

An EngB-type G domain is found at S36–E198. GTP-binding positions include G44–S51, G70–L74, D88–G91, N155–D158, and I182–A184. Mg(2+) is bound by residues S51 and T72.

Belongs to the TRAFAC class TrmE-Era-EngA-EngB-Septin-like GTPase superfamily. EngB GTPase family. The cofactor is Mg(2+).

Necessary for normal cell division and for the maintenance of normal septation. The polypeptide is Probable GTP-binding protein EngB (Mesomycoplasma hyopneumoniae (strain 7448) (Mycoplasma hyopneumoniae)).